The following is a 906-amino-acid chain: Protein translocase subunit SecA (906 aa).

ATP contacts are provided by residues Q86, 104-108 (GEGKT), and D499. A disordered region spans residues 865 to 885 (VSRIDPKDRNPEDPTSWGRVS). Residues C890, C892, C901, and H902 each coordinate Zn(2+).

The protein belongs to the SecA family. Monomer and homodimer. Part of the essential Sec protein translocation apparatus which comprises SecA, SecYEG and auxiliary proteins SecDF-YajC and YidC. Requires Zn(2+) as cofactor.

The protein localises to the cell inner membrane. It is found in the cytoplasm. It carries out the reaction ATP + H2O + cellular proteinSide 1 = ADP + phosphate + cellular proteinSide 2.. Its function is as follows. Part of the Sec protein translocase complex. Interacts with the SecYEG preprotein conducting channel. Has a central role in coupling the hydrolysis of ATP to the transfer of proteins into and across the cell membrane, serving both as a receptor for the preprotein-SecB complex and as an ATP-driven molecular motor driving the stepwise translocation of polypeptide chains across the membrane. This Rickettsia canadensis (strain McKiel) protein is Protein translocase subunit SecA.